Reading from the N-terminus, the 258-residue chain is 5'-nucleotidase SurE (258 aa).

Aspartate 18, aspartate 19, serine 49, and asparagine 102 together coordinate a divalent metal cation.

This sequence belongs to the SurE nucleotidase family. It depends on a divalent metal cation as a cofactor.

The protein resides in the cytoplasm. The catalysed reaction is a ribonucleoside 5'-phosphate + H2O = a ribonucleoside + phosphate. Its function is as follows. Nucleotidase that shows phosphatase activity on nucleoside 5'-monophosphates. The chain is 5'-nucleotidase SurE from Vibrio parahaemolyticus serotype O3:K6 (strain RIMD 2210633).